We begin with the raw amino-acid sequence, 339 residues long: Protein-glutamate methylesterase/protein-glutamine glutaminase (339 aa).

The Response regulatory domain occupies 2–119 (RIGVVNDMPM…EGNASSQSAR (118 aa)). Asp53 carries the 4-aspartylphosphate modification. A CheB-type methylesterase domain is found at 149–338 (PTPRRLIAIG…SRIIEACERS (190 aa)). Catalysis depends on residues Ser160, His187, and Asp280.

Belongs to the CheB family. Phosphorylated by CheA. Phosphorylation of the N-terminal regulatory domain activates the methylesterase activity.

It localises to the cytoplasm. The enzyme catalyses [protein]-L-glutamate 5-O-methyl ester + H2O = L-glutamyl-[protein] + methanol + H(+). It catalyses the reaction L-glutaminyl-[protein] + H2O = L-glutamyl-[protein] + NH4(+). In terms of biological role, involved in chemotaxis. Part of a chemotaxis signal transduction system that modulates chemotaxis in response to various stimuli. Catalyzes the demethylation of specific methylglutamate residues introduced into the chemoreceptors (methyl-accepting chemotaxis proteins or MCP) by CheR. Also mediates the irreversible deamidation of specific glutamine residues to glutamic acid. The sequence is that of Protein-glutamate methylesterase/protein-glutamine glutaminase from Mesorhizobium japonicum (strain LMG 29417 / CECT 9101 / MAFF 303099) (Mesorhizobium loti (strain MAFF 303099)).